A 334-amino-acid chain; its full sequence is Putative peptide import ATP-binding protein BAB2_1053 (334 aa).

Residues 22–272 (VRTDDLVRDF…PLHPYSRALL (251 aa)) enclose the ABC transporter domain. An ATP-binding site is contributed by 64–71 (GESGSGKS).

The protein belongs to the ABC transporter superfamily. As to quaternary structure, the complex is composed of two ATP-binding proteins (BAB2_1052 and BAB2_1053), two transmembrane proteins (BAB2_1050 and BAB2_1051) and a solute-binding protein (BAB2_1049).

The protein resides in the cell inner membrane. Probably part of an ABC transporter complex that could be involved in peptide import. Probably responsible for energy coupling to the transport system. The polypeptide is Putative peptide import ATP-binding protein BAB2_1053 (Brucella abortus (strain 2308)).